The primary structure comprises 57 residues: MSLRFPERAGYEKLGYRPHAKRVWVHDPLGLTRFIMRQLMMYPLVLPFTFPFYVPRS.

This is an uncharacterized protein from Homo sapiens (Human).